Reading from the N-terminus, the 261-residue chain is Type III pantothenate kinase (261 aa).

An ATP-binding site is contributed by 7–14 (EQGNTNTM). Residue 108-111 (GADR) coordinates substrate. Catalysis depends on aspartate 110, which acts as the Proton acceptor. Aspartate 130 provides a ligand contact to K(+). Threonine 133 serves as a coordination point for ATP. Threonine 187 provides a ligand contact to substrate.

It belongs to the type III pantothenate kinase family. In terms of assembly, homodimer. NH4(+) is required as a cofactor. The cofactor is K(+).

The protein resides in the cytoplasm. It catalyses the reaction (R)-pantothenate + ATP = (R)-4'-phosphopantothenate + ADP + H(+). The protein operates within cofactor biosynthesis; coenzyme A biosynthesis; CoA from (R)-pantothenate: step 1/5. In terms of biological role, catalyzes the phosphorylation of pantothenate (Pan), the first step in CoA biosynthesis. The protein is Type III pantothenate kinase of Caulobacter vibrioides (strain ATCC 19089 / CIP 103742 / CB 15) (Caulobacter crescentus).